The primary structure comprises 480 residues: Probable E3 ubiquitin protein ligase DRIPH (480 aa).

Residues 16 to 57 (CPICTNPFKDATTISECLHTFCRSCIRNKFINERVNACPVCN) form an RING-type zinc finger. 4 disordered regions span residues 93-133 (GPKT…EPAN), 167-193 (RGRKASLPKKIDSKPEPELPPKEPKIK), 241-261 (TPPDIVEPEISSDDDTEESVE), and 280-356 (VNQN…EMKV). The span at 103-112 (SSKKKRKSRT) shows a compositional bias: basic residues. The segment covering 113-133 (SLRVSSSRVSSSPDTPLEPAN) has biased composition (low complexity). Residues 175–193 (KKIDSKPEPELPPKEPKIK) are compositionally biased toward basic and acidic residues. Positions 246-260 (VEPEISSDDDTEESV) are enriched in acidic residues. Over residues 298–309 (GQKLKTNGAATS) the composition is skewed to polar residues.

The enzyme catalyses S-ubiquitinyl-[E2 ubiquitin-conjugating enzyme]-L-cysteine + [acceptor protein]-L-lysine = [E2 ubiquitin-conjugating enzyme]-L-cysteine + N(6)-ubiquitinyl-[acceptor protein]-L-lysine.. Its pathway is protein modification; protein ubiquitination. This chain is Probable E3 ubiquitin protein ligase DRIPH, found in Arabidopsis thaliana (Mouse-ear cress).